The primary structure comprises 306 residues: Ornithine carbamoyltransferase (306 aa).

Carbamoyl phosphate contacts are provided by residues 51–54 (STRT), glutamine 78, arginine 102, and 129–132 (HPCQ). Residues asparagine 160, aspartate 223, and 227–228 (SM) contribute to the L-ornithine site. Residues 263–264 (CL) and arginine 291 contribute to the carbamoyl phosphate site.

It belongs to the aspartate/ornithine carbamoyltransferase superfamily. OTCase family.

Its subcellular location is the cytoplasm. The enzyme catalyses carbamoyl phosphate + L-ornithine = L-citrulline + phosphate + H(+). It participates in amino-acid biosynthesis; L-arginine biosynthesis; L-arginine from L-ornithine and carbamoyl phosphate: step 1/3. Its function is as follows. Reversibly catalyzes the transfer of the carbamoyl group from carbamoyl phosphate (CP) to the N(epsilon) atom of ornithine (ORN) to produce L-citrulline. The polypeptide is Ornithine carbamoyltransferase (argF) (Nostoc punctiforme (strain ATCC 29133 / PCC 73102)).